We begin with the raw amino-acid sequence, 151 residues long: Phosphopantetheine adenylyltransferase (151 aa).

Ser9 lines the substrate pocket. Residues 9–10 (SF) and His17 each bind ATP. 3 residues coordinate substrate: Lys41, Thr73, and Arg87. ATP-binding positions include 88 to 90 (GLR), Glu98, and 122 to 128 (TSFISSS).

The protein belongs to the bacterial CoaD family. Homohexamer. Mg(2+) is required as a cofactor.

It localises to the cytoplasm. The catalysed reaction is (R)-4'-phosphopantetheine + ATP + H(+) = 3'-dephospho-CoA + diphosphate. The protein operates within cofactor biosynthesis; coenzyme A biosynthesis; CoA from (R)-pantothenate: step 4/5. In terms of biological role, reversibly transfers an adenylyl group from ATP to 4'-phosphopantetheine, yielding dephospho-CoA (dPCoA) and pyrophosphate. This is Phosphopantetheine adenylyltransferase from Flavobacterium psychrophilum (strain ATCC 49511 / DSM 21280 / CIP 103535 / JIP02/86).